The primary structure comprises 520 residues: Cryptochrome DASH (520 aa).

A Photolyase/cryptochrome alpha/beta domain is found at 5-141 (RTVICLLRND…RVQTFWGSTL (137 aa)). Residues 479–504 (SRHVNNKSSGPSSSKGRKGSSYTARQ) are disordered.

It belongs to the DNA photolyase class-1 family. The cofactor is FAD. Requires (6R)-5,10-methylene-5,6,7,8-tetrahydrofolate as cofactor.

May have a photoreceptor function. Has weak cyclobutyl pyrimidine photolyase activity when expressed in E.coli and when tested in vitro. In Danio rerio (Zebrafish), this protein is Cryptochrome DASH (cry-dash).